Here is a 588-residue protein sequence, read N- to C-terminus: MSDKKTKGLEWQEKPLSDNERLKTDSNFLRGTILDDLKDGLTGGFKGDNFQLIRFHGMYEQDDRDIRAERLEEKLEPLKFMLLRCRLPGGIIKPYQWIEIDKFAREHTRYQSIRLTNRQTFQYHGVPKGKLQPMHRLLHSIGLDSIATAADMNRNVLCTSNPIESELHQQAYEFAKKISEHLLPRSRGYLDVWVDGKKVESSDDLLKIEDEPILGKTYLPRKFKTAVAIPPLNDVDVYANDLNFIAIQDENGQLCGFNVLVGGGLSFEHGNTKTYPNVAYSLGFVPLEHTLAAAEGVVKTQRDFGNRSDRKNARVRYTIQNMTLDGFRAEVERCMNIKFEPTRPYEFTERGDRIGWVKGIDNNWHLTLFIESGRITDKPEKPLMTGVLELAKVHKGDFRITANQNLIVANVAEQDKAQIEAIARQYGLIQEISKLRENAMSCVSLPTCPLAMAEAERVLPDFISELDKVLSKHNVADESIITRITGCPNGCGRAMLAEIGLVGKAIGRYNLHIGGDRAGLRISRLYKENITLQEIVNEIDQLVARWATERQTNEAFGDFVIRSNIIAPVVNAHIDFWDATKIIPTTII.

Residues cysteine 442, cysteine 448, cysteine 487, and cysteine 491 each coordinate [4Fe-4S] cluster. Cysteine 491 serves as a coordination point for siroheme.

It belongs to the nitrite and sulfite reductase 4Fe-4S domain family. Alpha(8)-beta(8). The alpha component is a flavoprotein, the beta component is a hemoprotein. Siroheme is required as a cofactor. It depends on [4Fe-4S] cluster as a cofactor.

It catalyses the reaction hydrogen sulfide + 3 NADP(+) + 3 H2O = sulfite + 3 NADPH + 4 H(+). Its pathway is sulfur metabolism; hydrogen sulfide biosynthesis; hydrogen sulfide from sulfite (NADPH route): step 1/1. Its function is as follows. Component of the sulfite reductase complex that catalyzes the 6-electron reduction of sulfite to sulfide. This is one of several activities required for the biosynthesis of L-cysteine from sulfate. This chain is Sulfite reductase [NADPH] hemoprotein beta-component, found in Actinobacillus pleuropneumoniae serotype 7 (strain AP76).